A 123-amino-acid chain; its full sequence is Venom peptide MmKTx1 (123 aa).

The signal sequence occupies residues 1 to 21; the sequence is MSIKISAIALFMLSFTVFVNG.

It belongs to the scorpion La1-like peptide family. Post-translationally, contains 4 disulfide bonds. As to expression, expressed by the venom gland.

Its subcellular location is the secreted. The sequence is that of Venom peptide MmKTx1 from Olivierus martensii (Manchurian scorpion).